A 300-amino-acid polypeptide reads, in one-letter code: ClpXP adapter protein SpxH (300 aa).

This sequence belongs to the SpxH family. Interacts with Spx.

The protein localises to the cytoplasm. In terms of biological role, adapter protein required for efficient degradation of Spx by ClpXP under non-stress conditions. Interaction with Spx stabilizes Spx and exposes the C-terminus of Spx for recognition and proteolysis by ClpXP. The sequence is that of ClpXP adapter protein SpxH from Shouchella clausii (strain KSM-K16) (Alkalihalobacillus clausii).